A 448-amino-acid polypeptide reads, in one-letter code: uncharacterized protein (448 aa).

An N6-(pyridoxal phosphate)lysine modification is found at lysine 297.

Belongs to the class-III pyridoxal-phosphate-dependent aminotransferase family. It depends on pyridoxal 5'-phosphate as a cofactor.

This is an uncharacterized protein from Sinorhizobium fredii (strain NBRC 101917 / NGR234).